The following is an 863-amino-acid chain: MDERYDPKKIEGKWQAHWDAAGLFKVKEDPSKEKYFLMEMFPYPSGKIHMGHVRNYSIGDVVARFKRMQGFNVLHPMGWDAFGMPAENAAIKNNTHPAKWTYENIAAMGAQLKAMGFSYDWDREIATCKPDYYRWEQWLFVQMFKKGMVYRKEASVNWCHTCQTVLANEQVEQNMCWRCGDEVEQKKLKQWFFRITDYADDLLEHCDKLPGWPEKVVTMQKNWIGKSHGAEILFSVKDSDVKIKVFTTRPDTLCGATFMCLAPEHPLVEDLSKGTAQEAVVQEFVARMAKQDKAKRTADDKEKEGVPIGAQCINPLTGKTMEIYTANFALMEYGTGAVMSVPTHDQRDFEFATKYGLEKIVVIQPEGEALSPETMTEAYTDPGVLVNSGQFDGMKNTDAMEAIAQYLDENDMGKKTVQYRIRDWGISRQRYWGAPIPMIHCPDCGITPVPEDQLPVILPEDANLLEGGKSPLPELDSFVKTTCPQCGNENARRETDTMDTFVESSWYPERYCSPKCDDGMFDVDAVKYWMPVDQYIGGVEHAVMHLLYSRYFTRVLNDFGLVDFKEPFTRLLTQGMVCKETLKCPEHGWLFPHEVEGSGDERTCTKCGKIVEAGRVEKMSKSKLNVVDPEELLAKYGADTIRLFCLFAAPPERDLDWSEEGVEGSYRFLQRVWRMFAAHMDEVKDAQPFEGSPDDLDGYLKDLYKKTHQTIKKVTEDIDGRFHFNTAISAVMELVNMVYGLDDNLQGEKRAGVLRAAVEAVILLISPMTPHFTEELWSLFGKTQCVLETPWPAWREDALTADEVVVVLQVNGKLRSKLNVPLDTDDEKIKEMALADEKVQKFMGGKPIRKVIVVKNKLVNVVV.

The 'HIGH' region signature appears at 42-52; sequence PYPSGKIHMGH. The short motif at 618–622 is the 'KMSKS' region element; that stretch reads KMSKS. Position 621 (Lys621) interacts with ATP.

Belongs to the class-I aminoacyl-tRNA synthetase family.

It localises to the cytoplasm. The catalysed reaction is tRNA(Leu) + L-leucine + ATP = L-leucyl-tRNA(Leu) + AMP + diphosphate. This is Leucine--tRNA ligase from Desulfatibacillum aliphaticivorans.